Reading from the N-terminus, the 242-residue chain is Venom nerve growth factor 1 (242 aa).

A signal peptide spans 1–18 (MSMLCYTLIIAFLIGIWA). Residues 19 to 125 (APQSEDNVPL…ALNRNIQAKR (107 aa)) constitute a propeptide that is removed on maturation. Disulfide bonds link Cys-139/Cys-203, Cys-181/Cys-231, and Cys-191/Cys-233.

It belongs to the NGF-beta family. Homodimer; non-covalently linked. In terms of tissue distribution, expressed by the venom gland.

The protein resides in the secreted. Its function is as follows. Nerve growth factor is important for the development and maintenance of the sympathetic and sensory nervous systems. It stimulates division and differentiation of sympathetic and embryonic sensory neurons as well as basal forebrain cholinergic neurons in the brain. Its relevance in the snake venom is not clear. However, it has been shown to inhibit metalloproteinase-dependent proteolysis of platelet glycoprotein Ib alpha, suggesting a metalloproteinase inhibition to prevent metalloprotease autodigestion and/or protection against prey proteases. Binds a lipid between the two protein chains in the homodimer. The lipid-bound form promotes histamine relase from mouse mast cells, contrary to the lipid-free form. This is Venom nerve growth factor 1 from Pseudechis australis (Mulga snake).